The sequence spans 991 residues: MADSSSTSAFISTLIIYGLTAVVFVWLFLLLRPKNRRVYEPRSLKDIQTIPEEERTEPVPEGYFGWVEYLLSKPHSFLIQHTSVDGYFLLRYIGIVGSLSFVGCLLLLPILLPVNATNGNNLQGFELLSFSNVTNKNRFYAHVFLSWIFFGLFTYVIYKELYYYVVFRHAMQTTPLYDGLLSSRTVIVTELHKSIAQEGEMQMRFPKASNVAFAYDLSDLQELCKERAKNAAKYEAALNKVLNKCVKMTRNKTQKQLDKLYNNGTKPKDDLETYVPHKKRPKHRLGKLPLCLGGKKVNTLSYSSKRIGELNEEIHEKQADWASNDRQPACFIQFETQLEAQRCYQSVEAILGKKNFGKRLIGYSPEDVNWGSMRLSSKERHSRRAVANTIMVLLIIFWAFPVAVVGIISNVNFLTDKVPFLRFINNMPTFLMGVITGLLPTIALVVLMSLVPPFIVMLGKLSGCVTRQETDLYSQAWYYAFAVIQIFLVVTATSSASSTVDSIIDRPRSAMTLLANNLPKASNFYIMYFILKGLTGPTWTILQAVNLLLSKVLGRVLDSTPRQKWNRYNTLATPRMGIVYPGIEILVCIYICYSIIAPILLFFSTVMLTLLYVAYLYNLNYVFGFSFDLKGRNYPRALFQIFVGIYLSEVCLLGLFIMAKTWGPLVLEVFWIVVTALAHIYMKRKFIPLFDAVPLSAIRHARGEPGYSYPTSDLGLQEIKDIADEMKGKYEQDNTHGILTPVTKDDLKKANLIPDNDGSSENGTPSNPFESGSERASLSGSNAESDSIKKLNDTVIKKSSTLSSSTKDNNESTFVPEGEKFRKFHYSDVEALRNKRPYDEDDHSKHGPEGAVPVNADAGVIYSDPAAVMKEPQAFPPDVLETNTWTRRILQFFNPRRSYPFDSVRMRFPLVFNTSIEYDEEYLSSAYTDPCVREKDPIVWCCKDPLGVSKQQIQEARSNGLDVRDDFTRYDEKGKVIFTYNPPDYEPEAKK.

The Extracellular segment spans residues 1–9; that stretch reads MADSSSTSA. The chain crosses the membrane as a helical span at residues 10-30; that stretch reads FISTLIIYGLTAVVFVWLFLL. The Cytoplasmic portion of the chain corresponds to 31-91; sequence LRPKNRRVYE…TSVDGYFLLR (61 aa). The chain crosses the membrane as a helical span at residues 92 to 112; it reads YIGIVGSLSFVGCLLLLPILL. Topologically, residues 113–138 are extracellular; that stretch reads PVNATNGNNLQGFELLSFSNVTNKNR. 2 N-linked (GlcNAc...) asparagine glycosylation sites follow: Asn-115 and Asn-132. A helical transmembrane segment spans residues 139–159; the sequence is FYAHVFLSWIFFGLFTYVIYK. Residues 160–388 are Cytoplasmic-facing; the sequence is ELYYYVVFRH…ERHSRRAVAN (229 aa). The chain crosses the membrane as a helical span at residues 389-409; it reads TIMVLLIIFWAFPVAVVGIIS. At 410–437 the chain is on the extracellular side; that stretch reads NVNFLTDKVPFLRFINNMPTFLMGVITG. The helical transmembrane segment at 438–458 threads the bilayer; that stretch reads LLPTIALVVLMSLVPPFIVML. Topologically, residues 459-471 are cytoplasmic; it reads GKLSGCVTRQETD. The chain crosses the membrane as a helical span at residues 472–492; sequence LYSQAWYYAFAVIQIFLVVTA. The Extracellular portion of the chain corresponds to 493–523; sequence TSSASSTVDSIIDRPRSAMTLLANNLPKASN. A helical transmembrane segment spans residues 524–544; that stretch reads FYIMYFILKGLTGPTWTILQA. The Cytoplasmic portion of the chain corresponds to 545–582; it reads VNLLLSKVLGRVLDSTPRQKWNRYNTLATPRMGIVYPG. A helical membrane pass occupies residues 583–603; it reads IEILVCIYICYSIIAPILLFF. Ser-604 is a topological domain (extracellular). The helical transmembrane segment at 605-625 threads the bilayer; it reads TVMLTLLYVAYLYNLNYVFGF. Residues 626–637 lie on the Cytoplasmic side of the membrane; the sequence is SFDLKGRNYPRA. Residues 638-658 form a helical membrane-spanning segment; the sequence is LFQIFVGIYLSEVCLLGLFIM. Residues 659-661 lie on the Extracellular side of the membrane; it reads AKT. The chain crosses the membrane as a helical span at residues 662–682; it reads WGPLVLEVFWIVVTALAHIYM. Over 683–991 the chain is Cytoplasmic; the sequence is KRKFIPLFDA…PPDYEPEAKK (309 aa). Residues 749-787 form a disordered region; the sequence is KANLIPDNDGSSENGTPSNPFESGSERASLSGSNAESDS. Residues 757 to 785 are compositionally biased toward polar residues; it reads DGSSENGTPSNPFESGSERASLSGSNAES.

Belongs to the CSC1 (TC 1.A.17) family.

The protein resides in the cell membrane. Its function is as follows. Acts as an osmosensitive calcium-permeable cation channel. The sequence is that of Phosphate metabolism protein 7 (PHM7) from Saccharomyces cerevisiae (strain ATCC 204508 / S288c) (Baker's yeast).